The sequence spans 355 residues: Galectin-9 (355 aa).

2 Galectin domains span residues 17 to 148 and 227 to 355; these read FSGT…ISFQ and FITT…HVQT. A beta-D-galactoside is bound by residues asparagine 48, histidine 61, arginine 65, asparagine 75, 82–88, histidine 267, arginine 271, threonine 281, and 287–293; these read WGPEERK and WGSEERS.

As to quaternary structure, monomer. In terms of tissue distribution, peripheral blood leukocytes and lymphatic tissues. Expressed in lung, liver, breast and kidney with higher levels in tumor endothelial cells than normal endothelium (at protein level). Expressed in trophoblast cells in decidua and placenta in pregnancy (at protein level). Isoform 2 is the most abundant isoform expressed in endothelial cells. Upon endothelial cell activation isoform 2 expression decreases while expression of isoform 3 and isoform 5 increases. Isoform 4 decreases in pathological pregnancy.

The protein resides in the cytoplasm. It is found in the nucleus. It localises to the secreted. Binds galactosides. Has high affinity for the Forssman pentasaccharide. Ligand for HAVCR2/TIM3. Binding to HAVCR2 induces T-helper type 1 lymphocyte (Th1) death. Also stimulates bactericidal activity in infected macrophages by causing macrophage activation and IL1B secretion which restricts intracellular bacterial growth. Ligand for P4HB; the interaction retains P4HB at the cell surface of Th2 T-helper cells, increasing disulfide reductase activity at the plasma membrane, altering the plasma membrane redox state and enhancing cell migration. Ligand for CD44; the interaction enhances binding of SMAD3 to the FOXP3 promoter, leading to up-regulation of FOXP3 expression and increased induced regulatory T (iTreg) cell stability and suppressive function. Promotes ability of mesenchymal stromal cells to suppress T-cell proliferation. Expands regulatory T-cells and induces cytotoxic T-cell apoptosis following virus infection. Activates ERK1/2 phosphorylation inducing cytokine (IL-6, IL-8, IL-12) and chemokine (CCL2) production in mast and dendritic cells. Inhibits degranulation and induces apoptosis of mast cells. Induces maturation and migration of dendritic cells. Inhibits natural killer (NK) cell function. Can transform NK cell phenotype from peripheral to decidual during pregnancy. Astrocyte derived galectin-9 enhances microglial TNF production. May play a role in thymocyte-epithelial interactions relevant to the biology of the thymus. May provide the molecular basis for urate flux across cell membranes, allowing urate that is formed during purine metabolism to efflux from cells and serving as an electrogenic transporter that plays an important role in renal and gastrointestinal urate excretion. Highly selective to the anion urate. In terms of biological role, acts as an eosinophil chemoattractant. It also inhibits angiogenesis. Suppresses IFNG production by natural killer cells. This is Galectin-9 (LGALS9) from Homo sapiens (Human).